The primary structure comprises 1259 residues: Telomerase reverse transcriptase (1259 aa).

The 326-residue stretch at 742–1067 folds into the Reverse transcriptase domain; it reads RGEPRKAVRH…SFMPWSGLLI (326 aa). Mg(2+) contacts are provided by Asp837, Asp999, and Asp1000.

This sequence belongs to the reverse transcriptase family. Telomerase subfamily. Component of the telomerase ribonucleoprotein complex. Expressed in shoot apices and immature embryos.

Its subcellular location is the nucleus. It localises to the chromosome. It is found in the telomere. The catalysed reaction is DNA(n) + a 2'-deoxyribonucleoside 5'-triphosphate = DNA(n+1) + diphosphate. In terms of biological role, telomerase is a ribonucleoprotein enzyme essential for the replication of chromosome termini in most eukaryotes. It elongates telomeres. It is a reverse transcriptase that adds simple sequence repeats to chromosome ends by copying a template sequence within the RNA component of the enzyme. The chain is Telomerase reverse transcriptase (TERT) from Oryza sativa subsp. japonica (Rice).